The following is a 154-amino-acid chain: Large ribosomal subunit protein uL22c (154 aa).

It belongs to the universal ribosomal protein uL22 family. Part of the 50S ribosomal subunit.

It localises to the plastid. Its subcellular location is the chloroplast. In terms of biological role, this protein binds specifically to 23S rRNA. Functionally, the globular domain of the protein is located near the polypeptide exit tunnel on the outside of the subunit, while an extended beta-hairpin is found that lines the wall of the exit tunnel in the center of the 70S ribosome. The sequence is that of Large ribosomal subunit protein uL22c (rpl22) from Jasminum nudiflorum (Winter jasmine).